A 68-amino-acid chain; its full sequence is MAVPQNRVTRSRRNMRRSHDALVAANPAECPNCGELKRPHHVCGACGHYDSREVVAVTAETDLDEDAA.

It belongs to the bacterial ribosomal protein bL32 family.

The protein is Large ribosomal subunit protein bL32 of Cereibacter sphaeroides (strain ATCC 17025 / ATH 2.4.3) (Rhodobacter sphaeroides).